The chain runs to 264 residues: 3-methyl-2-oxobutanoate hydroxymethyltransferase (264 aa).

Residues D45 and D84 each coordinate Mg(2+). 3-methyl-2-oxobutanoate-binding positions include 45–46 (DS), D84, and K112. Residue E114 participates in Mg(2+) binding. E181 (proton acceptor) is an active-site residue.

This sequence belongs to the PanB family. In terms of assembly, homodecamer; pentamer of dimers. Requires Mg(2+) as cofactor.

Its subcellular location is the cytoplasm. It catalyses the reaction 3-methyl-2-oxobutanoate + (6R)-5,10-methylene-5,6,7,8-tetrahydrofolate + H2O = 2-dehydropantoate + (6S)-5,6,7,8-tetrahydrofolate. Its pathway is cofactor biosynthesis; (R)-pantothenate biosynthesis; (R)-pantoate from 3-methyl-2-oxobutanoate: step 1/2. In terms of biological role, catalyzes the reversible reaction in which hydroxymethyl group from 5,10-methylenetetrahydrofolate is transferred onto alpha-ketoisovalerate to form ketopantoate. The chain is 3-methyl-2-oxobutanoate hydroxymethyltransferase from Vibrio campbellii (strain ATCC BAA-1116).